The sequence spans 398 residues: Tryptophan synthase beta chain (398 aa).

Residue Lys89 is modified to N6-(pyridoxal phosphate)lysine.

It belongs to the TrpB family. Tetramer of two alpha and two beta chains. The cofactor is pyridoxal 5'-phosphate.

The catalysed reaction is (1S,2R)-1-C-(indol-3-yl)glycerol 3-phosphate + L-serine = D-glyceraldehyde 3-phosphate + L-tryptophan + H2O. It participates in amino-acid biosynthesis; L-tryptophan biosynthesis; L-tryptophan from chorismate: step 5/5. Functionally, the beta subunit is responsible for the synthesis of L-tryptophan from indole and L-serine. The sequence is that of Tryptophan synthase beta chain from Methanopyrus kandleri (strain AV19 / DSM 6324 / JCM 9639 / NBRC 100938).